Here is a 251-residue protein sequence, read N- to C-terminus: Small ribosomal subunit protein uS3 (251 aa).

In terms of domain architecture, KH type-2 spans Ile39–Arg112. The disordered stretch occupies residues Glu222–Lys251. Residues Ala240–Lys251 are compositionally biased toward basic and acidic residues.

It belongs to the universal ribosomal protein uS3 family. As to quaternary structure, part of the 30S ribosomal subunit. Forms a tight complex with proteins S10 and S14.

Functionally, binds the lower part of the 30S subunit head. Binds mRNA in the 70S ribosome, positioning it for translation. The polypeptide is Small ribosomal subunit protein uS3 (Anaeroplasma abactoclasticum).